Reading from the N-terminus, the 184-residue chain is Ribosome-recycling factor (184 aa).

The interval 141–164 is disordered; it reads DEKNGDITEDDLRSQTEDVQKATD.

This sequence belongs to the RRF family.

Its subcellular location is the cytoplasm. Its function is as follows. Responsible for the release of ribosomes from messenger RNA at the termination of protein biosynthesis. May increase the efficiency of translation by recycling ribosomes from one round of translation to another. This Staphylococcus haemolyticus (strain JCSC1435) protein is Ribosome-recycling factor.